A 130-amino-acid polypeptide reads, in one-letter code: Albumin-1 D (130 aa).

An N-terminal signal peptide occupies residues 1-26 (MASVKLASLIVLFATLGMFLTKNVGA). Intrachain disulfides connect C29-C46, C33-C48, and C41-C58. 2 consecutive propeptides follow at residues 64–69 (VFLKAN) and 123–130 (LLKSVSTA).

The C-terminal glycine may be removed from PA1b. In terms of tissue distribution, major component of both the cotyledons and embryonic axes of mature seeds.

In terms of biological role, PA1b binds to basic 7S globulin (BG) and stimulates its phosphorylation activity. Involved in the signal transduction system to regulate the growth and differentiation as a hormone peptide. Toxic to various insects through binding to a high affinity binding site in the insect gut. This Pisum sativum (Garden pea) protein is Albumin-1 D.